Reading from the N-terminus, the 725-residue chain is Heme/hemopexin utilization protein C (725 aa).

A signal peptide spans 1-21 (MRFSKLSLAIATTLVTANALA). The region spanning 36–147 (DPSRFAYTPE…LGGVVAMRTP (112 aa)) is the TBDR plug domain. Residues 158–725 (KFGVKIRQGY…NAKISAVYSF (568 aa)) form the TBDR beta-barrel domain. The short motif at 708-725 (SLMEGTGRNAKISAVYSF) is the TonB C-terminal box element.

This sequence belongs to the TonB-dependent receptor family.

The protein localises to the cell outer membrane. Its function is as follows. Required for utilization of free heme at low concentrations. In Haemophilus influenzae, this protein is Heme/hemopexin utilization protein C (hxuC).